A 112-amino-acid chain; its full sequence is uncharacterized protein (112 aa).

The next 2 membrane-spanning stretches (helical) occupy residues 44–63 and 68–90; these read VITGIVGYVFVVVYVVLHSL and LAALAMALVFFAITGEYGGKLVH.

The protein resides in the cell membrane. This is an uncharacterized protein from Archaeoglobus fulgidus (strain ATCC 49558 / DSM 4304 / JCM 9628 / NBRC 100126 / VC-16).